The sequence spans 79 residues: UPF0180 protein BCE_1513 (79 aa).

It belongs to the UPF0180 family.

The protein is UPF0180 protein BCE_1513 of Bacillus cereus (strain ATCC 10987 / NRS 248).